The primary structure comprises 2082 residues: Probable ATP-dependent helicase PF08_0048 (2082 aa).

An HSA domain is found at 66-138; that stretch reads KIVEPAKTPE…EEKRLKLYSK (73 aa). The segment covering 209 to 221 has biased composition (low complexity); the sequence is NNSEIVNNNASSV. Disordered regions lie at residues 209 to 234 and 301 to 470; these read NNSE…DDLT and NVIE…SPTR. Basic and acidic residues-rich tracts occupy residues 419-448 and 455-465; these read NSDH…HIDN and TGEDYKSDKEN. Positions 476–531 form a coiled coil; sequence KKEKYDEYDTKLKIEKREEENKNYEKDEHEYESDNYDKEKINKKKELILLKNDIEN. A disordered region spans residues 532–641; that stretch reads DSDETSEHIK…KNDSDDNDDI (110 aa). The segment covering 536 to 545 has biased composition (basic and acidic residues); it reads TSEHIKRDSR. A compositionally biased stretch (low complexity) spans 579-598; that stretch reads DNNNSENDNNNDNNNDNNND. Positions 599-627 are enriched in acidic residues; it reads NNDDNNDDNNDDNNDDNNDDNNDDNNDDN. Residues 674–839 enclose the Helicase ATP-binding domain; sequence LYLYKNNING…WSLLHFLMPN (166 aa). Position 687–694 (687–694) interacts with ATP; the sequence is DEMGLGKT. The DEAH box motif lies at 790 to 793; it reads DEAH. The disordered stretch occupies residues 1199–1255; that stretch reads EQNNNNSKDNNNNIDNNNNIDNNNNIDNNNNIDNNNNIDNNNNNIDNNNNIDNHHNN. A Helicase C-terminal domain is found at 1772-1922; that stretch reads ALEKLLSKCK…NICINMGNFN (151 aa). Residues 1972–2060 adopt a coiled-coil conformation; sequence EQVENKDKMN…DEMRMKIEIE (89 aa).

This sequence belongs to the SNF2/RAD54 helicase family. SWR1 subfamily. Component of a chromatin-remodeling complex.

It localises to the nucleus. Functionally, catalytic component of a chromatin remodeling complex. In Plasmodium falciparum (isolate 3D7), this protein is Probable ATP-dependent helicase PF08_0048.